The following is a 913-amino-acid chain: Clumping factor B (913 aa).

Residues 1-44 (MKKRIDYLSNKQNKYSIRRFTVGTTSVIVGATILFGIGNHQAQA) form the signal peptide. Residues 15–26 (YSIRRFTVGTTS) carry the YSIRK-G/S signaling motif motif. 2 stretches are compositionally biased toward polar residues: residues 44–61 (ASEQSNDTTQSSKNNASA) and 68–95 (MIETPQLNTTANDTSDISANTNSANVDS). Residues 44 to 192 (ASEQSNDTTQ…QGTSKPSVRT (149 aa)) are disordered. Residues 45 to 542 (SEQSNDTTQS…GSADGDSAVN (498 aa)) are ligand binding A region. The span at 96–119 (TTKPMSTQTSNTTTTEPASTNETP) shows a compositional bias: low complexity. The segment covering 120-189 (QPTAIKNQAT…SNAQGTSKPS (70 aa)) has biased composition (polar residues). Positions 272–276 (DYSNS) match the MIDAS-like motif motif. The tract at residues 530-885 (YGGGSADGDS…ETGDKSENTN (356 aa)) is disordered. The segment covering 545-555 (DPTPGPPVDPE) has biased composition (pro residues). A compositionally biased stretch (acidic residues) spans 556–837 (PSPDPEPEPT…SDSDSDSDSD (282 aa)). The segment covering 841–852 (RVTPPNNEQKAP) has biased composition (polar residues). Residues 869-882 (HKTDALPETGDKSE) show a composition bias toward basic and acidic residues. The short motif at 874–878 (LPETG) is the LPXTG sorting signal element. Residue Thr877 is modified to Pentaglycyl murein peptidoglycan amidated threonine. The propeptide at 878 to 913 (GDKSENTNATLFGAMMALLGSLLLFRKRKQDHKEKA) is removed by sortase.

It belongs to the serine-aspartate repeat-containing protein (SDr) family. Post-translationally, proteolytically cleaved by aureolysin (aur). This cleavage leads to the inactivation of ClfB.

The protein localises to the secreted. It is found in the cell wall. Functionally, cell surface-associated protein implicated in virulence by promoting bacterial attachment to both alpha- and beta-chains of human fibrinogen and inducing the formation of bacterial clumps. In Staphylococcus aureus (strain COL), this protein is Clumping factor B (clfB).